A 291-amino-acid chain; its full sequence is 4-diphosphocytidyl-2-C-methyl-D-erythritol kinase (291 aa).

The active site involves K10. 94 to 104 serves as a coordination point for ATP; sequence PVSAGLAGGSS. The active site involves D136.

This sequence belongs to the GHMP kinase family. IspE subfamily.

The enzyme catalyses 4-CDP-2-C-methyl-D-erythritol + ATP = 4-CDP-2-C-methyl-D-erythritol 2-phosphate + ADP + H(+). The protein operates within isoprenoid biosynthesis; isopentenyl diphosphate biosynthesis via DXP pathway; isopentenyl diphosphate from 1-deoxy-D-xylulose 5-phosphate: step 3/6. Catalyzes the phosphorylation of the position 2 hydroxy group of 4-diphosphocytidyl-2C-methyl-D-erythritol. This is 4-diphosphocytidyl-2-C-methyl-D-erythritol kinase from Listeria welshimeri serovar 6b (strain ATCC 35897 / DSM 20650 / CCUG 15529 / CIP 8149 / NCTC 11857 / SLCC 5334 / V8).